A 1866-amino-acid chain; its full sequence is Rho GTPase-activating protein 100F (1866 aa).

Disordered regions lie at residues 22–98 (MLCC…AGVK), 262–336 (RRGN…NNYS), and 466–530 (LRSS…DTEA). Low complexity predominate over residues 59-77 (GNQQHHGNQQHHGNQQQHH). In terms of domain architecture, PDZ spans 179–264 (LVEIVKRPGQ…LVLAIRQRRG (86 aa)). Residues 271-286 (PGPPTLSRPEQKPPPV) are compositionally biased toward pro residues. The segment covering 301-326 (TDRMPRPRSSRDRRTGDGREMTESRS) has biased composition (basic and acidic residues). Phosphoserine is present on serine 719. Residues 745–775 (AGPASPSGSILSTGGHQSPAPTPSATLPRPH) are disordered. Residues 750–760 (PSGSILSTGGH) show a composition bias toward polar residues. The region spanning 789-908 (KLDKPIVDIG…LRQSPLHQLA (120 aa)) is the C2 domain. The 201-residue stretch at 948–1148 (ADLETVVNRE…YLLQIWPQPQ (201 aa)) folds into the Rho-GAP domain. 6 disordered regions span residues 1273-1328 (GGSV…QVKI), 1356-1380 (PTTQ…RRGN), 1393-1479 (SVVN…DLVS), 1514-1607 (FTPI…MVST), 1644-1727 (YTND…YGTL), and 1819-1840 (DEKP…ADKG). The segment covering 1282-1292 (DPSPLPLPGTP) has biased composition (pro residues). Low complexity predominate over residues 1293-1302 (SPGSSSASTG). Composition is skewed to polar residues over residues 1356–1377 (PTTQ…TASR), 1393–1408 (SVVN…YTGS), and 1416–1429 (GNSS…NASG). The span at 1443-1479 (SSATSSSSSSQATVLSAGSTATSAPTTSSDDSDDLVS) shows a compositional bias: low complexity. The segment covering 1538–1587 (QLVTPISGSSSKPGATTGAISKYTTGSVESSINANSQKLSSPSRLCNSKD) has biased composition (polar residues). 2 stretches are compositionally biased toward low complexity: residues 1590–1607 (SRTG…MVST) and 1644–1658 (YTND…SSKS). The span at 1659-1670 (GIGGGSGTGLGA) shows a compositional bias: gly residues. 2 stretches are compositionally biased toward low complexity: residues 1671–1688 (VSGA…LFGS) and 1696–1720 (GSSH…NHNT). Over residues 1830-1839 (HGEEKLGADK) the composition is skewed to basic and acidic residues.

As to quaternary structure, interacts (via PDZ domain) with Nrx-1; may recruit Nrx-1 to the presynaptic active zone.

The protein resides in the presynapse. Functionally, GTPase activator for the Rho-type GTPases by converting them to an inactive GDP-bound state. Promotes the anchoring of Liprin-alpha clusters at synapses. Recruits and keeps Nrx-1 levels high in active zones in the presynapse opposite the postsynaptic region. The chain is Rho GTPase-activating protein 100F (RhoGAP100F) from Drosophila melanogaster (Fruit fly).